Reading from the N-terminus, the 265-residue chain is Oxygen-evolving enhancer protein 2-2, chloroplastic (265 aa).

The transit peptide at 1–79 (MASTQCFLHH…VGSKVSPADA (79 aa)) directs the protein to the chloroplast.

Belongs to the PsbP family.

The protein resides in the plastid. Its subcellular location is the chloroplast thylakoid membrane. In terms of biological role, may be involved in the regulation of photosystem II. This is Oxygen-evolving enhancer protein 2-2, chloroplastic (PSBP2) from Nicotiana tabacum (Common tobacco).